The chain runs to 479 residues: Ribulose bisphosphate carboxylase large chain (479 aa).

Residues 1–2 (MS) constitute a propeptide that is removed on maturation. Pro3 carries the post-translational modification N-acetylproline. Residues Asn123 and Thr173 each coordinate substrate. The active-site Proton acceptor is Lys175. Lys177 provides a ligand contact to substrate. Mg(2+) contacts are provided by Lys201, Asp203, and Glu204. Lys201 is modified (N6-carboxylysine). The active-site Proton acceptor is His294. Positions 295, 327, and 379 each coordinate substrate.

It belongs to the RuBisCO large chain family. Type I subfamily. In terms of assembly, heterohexadecamer of 8 large chains and 8 small chains; disulfide-linked. The disulfide link is formed within the large subunit homodimers. Requires Mg(2+) as cofactor. In terms of processing, the disulfide bond which can form in the large chain dimeric partners within the hexadecamer appears to be associated with oxidative stress and protein turnover.

Its subcellular location is the plastid. The protein localises to the chloroplast. The catalysed reaction is 2 (2R)-3-phosphoglycerate + 2 H(+) = D-ribulose 1,5-bisphosphate + CO2 + H2O. It carries out the reaction D-ribulose 1,5-bisphosphate + O2 = 2-phosphoglycolate + (2R)-3-phosphoglycerate + 2 H(+). Functionally, ruBisCO catalyzes two reactions: the carboxylation of D-ribulose 1,5-bisphosphate, the primary event in carbon dioxide fixation, as well as the oxidative fragmentation of the pentose substrate in the photorespiration process. Both reactions occur simultaneously and in competition at the same active site. The polypeptide is Ribulose bisphosphate carboxylase large chain (Hordeum vulgare (Barley)).